Consider the following 187-residue polypeptide: Segregation and condensation protein B (187 aa).

Belongs to the ScpB family. In terms of assembly, homodimer. Homodimerization may be required to stabilize the binding of ScpA to the Smc head domains. Component of a cohesin-like complex composed of ScpA, ScpB and the Smc homodimer, in which ScpA and ScpB bind to the head domain of Smc. The presence of the three proteins is required for the association of the complex with DNA.

Its subcellular location is the cytoplasm. In terms of biological role, participates in chromosomal partition during cell division. May act via the formation of a condensin-like complex containing Smc and ScpA that pull DNA away from mid-cell into both cell halves. The sequence is that of Segregation and condensation protein B from Agathobacter rectalis (strain ATCC 33656 / DSM 3377 / JCM 17463 / KCTC 5835 / VPI 0990) (Eubacterium rectale).